A 109-amino-acid polypeptide reads, in one-letter code: B melanoma antigen 2 (109 aa).

A signal peptide spans 1-17; sequence MAAGVVFLALSAQLLQA.

It belongs to the BAGE family. As to expression, not expressed in normal tissues except in testis. Expressed in 22% of melanomas, in bladder and lung carcinomas.

It localises to the secreted. In terms of biological role, unknown. Candidate gene encoding tumor antigens. In Homo sapiens (Human), this protein is B melanoma antigen 2 (BAGE2).